A 243-amino-acid chain; its full sequence is Putative C-type lectin protein A7 (243 aa).

The chain crosses the membrane as a helical span at residues 23–43 (IFFILAATNLMIAAFALGCLA). One can recognise a C-type lectin domain in the interval 116-223 (GQKACYYVPP…CTTSKLCLCG (108 aa)). Disulfide bonds link cysteine 137–cysteine 222 and cysteine 198–cysteine 214.

Its subcellular location is the host membrane. The sequence is that of Putative C-type lectin protein A7 (A7) from Alcelaphine herpesvirus 1 (strain C500) (AlHV-1).